The following is a 358-amino-acid chain: C-X-C chemokine receptor type 4-A (358 aa).

The interval 1 to 25 (MDGFSGGIDINIFDGNSTENGSGDF) is important for chemokine binding and signaling. Over 1–44 (MDGFSGGIDINIFDGNSTENGSGDFEDFIEPCFMHENSDFNRIF) the chain is Extracellular. N16 and N20 each carry an N-linked (GlcNAc...) asparagine glycan. Intrachain disulfides connect C32/C281 and C113/C190. Residues 45–67 (LPTIYSFIFLLGIIGNGLVVVVM) form a helical membrane-spanning segment. The Cytoplasmic segment spans residues 68-81 (GYQKKSRTMTDKYR). The chain crosses the membrane as a helical span at residues 82–103 (LHLSVADLLFVFTLPFWSVDAA). The segment at 98–101 (WSVD) is chemokine binding. Residues 104 to 114 (IGWYFKEFLCK) lie on the Extracellular side of the membrane. The helical transmembrane segment at 115–134 (AVHVIYTVNLYSSVLILAFI) threads the bilayer. The tract at residues 117 to 121 (HVIYT) is chemokine binding. The Cytoplasmic segment spans residues 135–158 (SLDRYLAIVHATNSQGSRKMLADK). Positions 139–151 (YLAIVHATNSQGS) are involved in dimerization; when bound to chemokine. Residues 159 to 178 (VVYAGVWLPALLLTVPDLVF) form a helical membrane-spanning segment. The Extracellular portion of the chain corresponds to 179–202 (ARVSDENGQFVCDRIYPIENRETW). Positions 190 to 194 (CDRIY) are chemokine binding, important for signaling. A helical transmembrane segment spans residues 203–223 (TVGFRFLHITVGLILPGLIIL). Residues 224 to 248 (ICYCVIISKLSHSKGHQKRKALKTT) are Cytoplasmic-facing. Residues 249–268 (VILILAFFACWLPYYVCLTT) traverse the membrane as a helical segment. Residues 269 to 289 (DTFMLLGLVKGDCIWENTLHM) lie on the Extracellular side of the membrane. A helical transmembrane segment spans residues 290 to 309 (AISITEALAFFHCCLNPILY). Residues 310 to 358 (AFLGAKFKTSAQNAFTSVSRGSSLKILSKKRAGLSSVSTESESSSFHSS) are Cytoplasmic-facing. Residues 338-358 (KKRAGLSSVSTESESSSFHSS) form a disordered region. A compositionally biased stretch (low complexity) spans 344-358 (SSVSTESESSSFHSS).

The protein belongs to the G-protein coupled receptor 1 family. In terms of assembly, monomer. Can form dimers. Post-translationally, sulfation is required for efficient binding of cxcl12/sdf-1alpha and promotes its dimerization. O- and N-glycosylated. Highly expressed in the embryonic nervous system including forebrain, hindbrain and sensory organs (including eye), and in neural crest cells. Also expressed in the dorsal lateral plate, the first site of definitive hematopoiesis in the embryo. Appears in migrating presumptive primordial germ cells (pPGCs) from stage 24. Expressed in the epidermis at stage 40. In the adult, highly expressed in the spleen with lower levels of expression in the liver and very low levels in kidney, heart, skin and brain.

Its subcellular location is the cell membrane. The protein resides in the cytoplasm. It localises to the nucleus. It is found in the early endosome. The protein localises to the late endosome. Its subcellular location is the lysosome. Functionally, receptor for the C-X-C chemokine cxcl12/sdf-1. Transduces a signal by increasing the intracellular level of calcium ions. Signaling with cxcl12/sdf-1 mediates the directional movement of mesodermal cells during gastrulation. May play a role in the migration of embryonic presumptive primordial germ cells (pPGCs). May also be involved in regulating the migration of hematopoietic stem cells into the larval liver. The sequence is that of C-X-C chemokine receptor type 4-A (cxcr4-a) from Xenopus laevis (African clawed frog).